The primary structure comprises 331 residues: N-arachidonyl glycine receptor (331 aa).

Residues 1-26 (MITLNNQDQPVPFNSSHPDEYKIAAL) are Extracellular-facing. N14 carries N-linked (GlcNAc...) asparagine glycosylation. Residues 27 to 47 (VFYSCIFIIGLFVNITALWVF) form a helical membrane-spanning segment. Over 48–56 (SCTTKKRTT) the chain is Cytoplasmic. The chain crosses the membrane as a helical span at residues 57–77 (VTIYMMNVALVDLIFIMTLPF). The Extracellular segment spans residues 78–95 (RMFYYAKDEWPFGEYFCQ). C94 and C172 form a disulfide bridge. A helical transmembrane segment spans residues 96 to 116 (ILGALTVFYPSIALWLLAFIS). Residues 117 to 138 (ADRYMAIVQPKYAKELKNTCKA) are Cytoplasmic-facing. A helical transmembrane segment spans residues 139–159 (VLACVGVWIMTLTTTTPLLLL). At 160–191 (YKDPDKDSTPATCLKISDIIYLKAVNVLNLTR) the chain is on the extracellular side. A helical transmembrane segment spans residues 192–212 (LTFFFLIPLFIMIGCYLVIIH). The Cytoplasmic portion of the chain corresponds to 213–232 (NLLHGRTSKLKPKVKEKSIR). The chain crosses the membrane as a helical span at residues 233 to 253 (IIITLLVQVLVCFMPFHICFA). The Extracellular portion of the chain corresponds to 254 to 268 (FLMLGTGENSYNPWG). A helical membrane pass occupies residues 269 to 289 (AFTTFLMNLSTCLDVILYYIV). Topologically, residues 290 to 331 (SKQFQARVISVMLYRNYLRSMRRKSFRSGSLRSLSNINSEML) are cytoplasmic. The residue at position 322 (S322) is a Phosphoserine.

This sequence belongs to the G-protein coupled receptor 1 family. Expressed in midpiece of spermatozoon (at protein level). Most abundant in testis and spleen. Highly expressed in CD4 and CD8-positive T-cells as well as CD19-positive B-cells.

It is found in the cell membrane. It localises to the cytoplasmic vesicle membrane. Its function is as follows. G protein-coupled receptor (GPCR) that plays a role in diverse physiological processes particularly within the immune and nervous systems. Becomes active when triggered by various endogenous ligands including endocannabinoid N-arachidonyl glycine (NAGly), delta-9-tetrahydrocannabinol or resolvin D2/RvD2 derived from the omega-3 fatty acid docosahexaenoic acid (DHA). Upon RvD2 binding, facilitates the resolution of inflammation, aiding in tissue repair and homeostasis. Mechanistically, RvD2 ligation initiates Galphas protein coupling, activation of cAMP-PKA signaling pathway and phosphorylation of STAT3, leading to RvD2-stimulated macrophage phagocytosis. Mediates NAGly-induced process of reorganization of actin filaments and induction of acrosomal exocytosis. Activation by N-arachidonoyl glycine (NAGly) can also induce apoptosis in macrophages. Plays a role in homeostasis of CD8+ subsets of intraepithelial lymphocytes (IELs) (CD8alphaalpha and CD8alphabeta IELs) in small intestine by supporting preferential migration of CD8alphaalpha T-cells to intraepithelial compartment over lamina propria compartment, and by mediating their reconstitution into small intestine after bone marrow transplant. Also participates in hypotensive responses, mediating reduction in intraocular and blood pressure. This Homo sapiens (Human) protein is N-arachidonyl glycine receptor (GPR18).